The chain runs to 152 residues: Inner membrane protein YbbJ (152 aa).

A helical transmembrane segment spans residues 1–21 (MMELMVVHPHIFWLSLGGLLL). The Cytoplasmic portion of the chain corresponds to 22–31 (AAEMLGGNGY). Residues 32–52 (LLWSGVAAVITGLVVWLVPLG) form a helical membrane-spanning segment. Residues 53–54 (WE) lie on the Periplasmic side of the membrane. Residues 55–75 (WQGVMFAILTLLAAWLWWKWL) form a helical membrane-spanning segment. Over 76 to 152 (SRRVREQKHS…ITLHIRAVSS (77 aa)) the chain is Cytoplasmic.

To M.jannaschii MJ0826.

It is found in the cell inner membrane. The sequence is that of Inner membrane protein YbbJ (ybbJ) from Escherichia coli (strain K12).